Reading from the N-terminus, the 127-residue chain is UPF0102 protein Mmwyl1_2395 (127 aa).

This sequence belongs to the UPF0102 family.

The chain is UPF0102 protein Mmwyl1_2395 from Marinomonas sp. (strain MWYL1).